Consider the following 1408-residue polypeptide: DNA-directed RNA polymerase subunit beta' (1408 aa).

4 residues coordinate Zn(2+): C70, C72, C85, and C88. Mg(2+) contacts are provided by D458, D460, and D462. Zn(2+) contacts are provided by C813, C887, C894, and C897. The disordered stretch occupies residues 1387-1408; that stretch reads AELEAATATAPADAGGDSPATE. Residues 1389–1408 show a composition bias toward low complexity; that stretch reads LEAATATAPADAGGDSPATE.

Belongs to the RNA polymerase beta' chain family. The RNAP catalytic core consists of 2 alpha, 1 beta, 1 beta' and 1 omega subunit. When a sigma factor is associated with the core the holoenzyme is formed, which can initiate transcription. The cofactor is Mg(2+). Zn(2+) is required as a cofactor.

The catalysed reaction is RNA(n) + a ribonucleoside 5'-triphosphate = RNA(n+1) + diphosphate. Functionally, DNA-dependent RNA polymerase catalyzes the transcription of DNA into RNA using the four ribonucleoside triphosphates as substrates. The polypeptide is DNA-directed RNA polymerase subunit beta' (Polaromonas sp. (strain JS666 / ATCC BAA-500)).